Here is a 21-residue protein sequence, read N- to C-terminus: Cupiennin-6a (21 aa).

S21 carries the post-translational modification Serine amide.

As to expression, expressed by the venom gland.

It localises to the secreted. This Cupiennius salei (American wandering spider) protein is Cupiennin-6a.